Consider the following 273-residue polypeptide: Peroxiredoxin-4 (273 aa).

Residues 1–40 form the signal peptide; it reads METWSKLLDGTTPSRRWRKLVLLLPPLLLFLLQTEALQGL. Residues 81–239 enclose the Thioredoxin domain; the sequence is AKISKPAPYW…TLRLVQAFQY (159 aa). C126 serves as the catalytic Cysteine sulfenic acid (-SOH) intermediate.

It belongs to the peroxiredoxin family. AhpC/Prx1 subfamily. In terms of assembly, homodimer; disulfide-linked, upon oxidation. 5 homodimers assemble to form a ring-like decamer. Post-translationally, the enzyme can be inactivated by further oxidation of the cysteine sulfenic acid (C(P)-SOH) to sulphinic acid (C(P)-SO2H) and sulphonic acid (C(P)-SO3H) instead of its condensation to a disulfide bond.

It is found in the cytoplasm. Its subcellular location is the endoplasmic reticulum. It localises to the secreted. It catalyses the reaction a hydroperoxide + [thioredoxin]-dithiol = an alcohol + [thioredoxin]-disulfide + H2O. Functionally, thiol-specific peroxidase that catalyzes the reduction of hydrogen peroxide and organic hydroperoxides to water and alcohols, respectively. Plays a role in cell protection against oxidative stress by detoxifying peroxides and as sensor of hydrogen peroxide-mediated signaling events. Regulates the activation of NF-kappa-B in the cytosol by a modulation of I-kappa-B-alpha phosphorylation. The sequence is that of Peroxiredoxin-4 (Prdx4) from Rattus norvegicus (Rat).